The chain runs to 468 residues: Acetyl-CoA decarbonylase/synthase complex subunit gamma (468 aa).

A 4Fe-4S domain is found at 1–60 (MKINSPLEAYKYLPQTNCGECGEATCMAFASKLIDRSGKTSDCPPLIKEKKFAKKLAELD). Positions 18, 21, 26, and 43 each coordinate [4Fe-4S] cluster.

As to quaternary structure, heterodimer of delta and gamma chains. The ACDS complex is made up of alpha, epsilon, beta, gamma and delta chains with a probable stoichiometry of (alpha(2)epsilon(2))(4)-beta(8)-(gamma(1)delta(1))(8). Corrinoid serves as cofactor. Requires [4Fe-4S] cluster as cofactor.

It carries out the reaction 5,6,7,8-tetrahydrosarcinapterin + methyl-Co(III)-[corrinoid Fe-S protein] = 5-methyltetrahydrosarcinapterin + Co(I)-[corrinoid Fe-S protein] + H(+). It participates in one-carbon metabolism; methanogenesis from acetate. Part of a complex that catalyzes the reversible cleavage of acetyl-CoA, allowing growth on acetate as sole source of carbon and energy. This is Acetyl-CoA decarbonylase/synthase complex subunit gamma from Methanosarcina acetivorans (strain ATCC 35395 / DSM 2834 / JCM 12185 / C2A).